Consider the following 255-residue polypeptide: NAD kinase (255 aa).

Residue Asp-44 is the Proton acceptor of the active site. NAD(+) contacts are provided by residues Asp-44–Gly-45, His-49, Asn-114–Glu-115, Asp-144, Ala-152, Ser-155–Ser-160, and Gln-216.

It belongs to the NAD kinase family. It depends on a divalent metal cation as a cofactor.

It localises to the cytoplasm. The catalysed reaction is NAD(+) + ATP = ADP + NADP(+) + H(+). Functionally, involved in the regulation of the intracellular balance of NAD and NADP, and is a key enzyme in the biosynthesis of NADP. Catalyzes specifically the phosphorylation on 2'-hydroxyl of the adenosine moiety of NAD to yield NADP. The chain is NAD kinase from Rickettsia rickettsii (strain Iowa).